Reading from the N-terminus, the 328-residue chain is Probable voltage-gated potassium channel subunit beta (328 aa).

3 residues coordinate NADP(+): W21, Q27, and D49. Y54 serves as the catalytic Proton donor/acceptor. Positions 152, 178, 207, 208, 209, 210, 211, 218, 229, 285, 287, 291, 294, and 295 each coordinate NADP(+).

It belongs to the shaker potassium channel beta subunit family. Forms heteromultimeric complexes with potassium channel alpha subunits. As to expression, expressed in roots, leaves and flowers (at protein level).

Functionally, probable accessory potassium channel protein which modulates the activity of the pore-forming alpha subunit. In Arabidopsis thaliana (Mouse-ear cress), this protein is Probable voltage-gated potassium channel subunit beta (KAB1).